The sequence spans 104 residues: Phosphoribosyl-ATP pyrophosphatase (104 aa).

Belongs to the PRA-PH family.

It is found in the cytoplasm. It carries out the reaction 1-(5-phospho-beta-D-ribosyl)-ATP + H2O = 1-(5-phospho-beta-D-ribosyl)-5'-AMP + diphosphate + H(+). The protein operates within amino-acid biosynthesis; L-histidine biosynthesis; L-histidine from 5-phospho-alpha-D-ribose 1-diphosphate: step 2/9. The chain is Phosphoribosyl-ATP pyrophosphatase from Streptococcus thermophilus (strain ATCC BAA-491 / LMD-9).